Reading from the N-terminus, the 404-residue chain is Ribosomal RNA large subunit methyltransferase F (404 aa).

Basic residues-rich tracts occupy residues 1-10 (MTKHSQKQNR) and 18-29 (QTRRKKPAGKLK). Disordered stretches follow at residues 1 to 54 (MTKH…HERN), 156 to 177 (GTRQ…QRYK), and 289 to 308 (RAAK…PDAN). Basic and acidic residues predominate over residues 30–54 (AKSEAKLDTRGKPETTEKKGLHERN). Residues 157–172 (TRQNVPYASKPESSAP) are compositionally biased toward polar residues.

The protein belongs to the methyltransferase superfamily. METTL16/RlmF family.

The protein resides in the cytoplasm. It catalyses the reaction adenosine(1618) in 23S rRNA + S-adenosyl-L-methionine = N(6)-methyladenosine(1618) in 23S rRNA + S-adenosyl-L-homocysteine + H(+). Functionally, specifically methylates the adenine in position 1618 of 23S rRNA. This Shewanella sediminis (strain HAW-EB3) protein is Ribosomal RNA large subunit methyltransferase F.